The chain runs to 825 residues: Leucine-rich repeat and guanylate kinase domain-containing protein (825 aa).

Residues 73-96 are disordered; it reads DSDGDEDQGEGEAGSEESSESEML. 9 LRR repeats span residues 129 to 149, 150 to 171, 172 to 193, 194 to 215, 216 to 237, 238 to 259, 260 to 280, 281 to 302, and 303 to 324; these read YLNLTLSGCNLIDVSILCGYV, HLQKLDLSANKIEDLSCVSCMP, YLLELNASQNNLTTFFNFKPPK, NLKKADFSHNQISEICDLSAYH, ALTKLILDGNEIEEISGLEMCN, NLIHLSLANNKITTINGLNKLP, IKILCLSNNQIEMITGLEDLK, ALQNLDLSHNQISSLQGLENHD, and LLEVINLEDNKIAELREIEYIK. Residues 337–375 form the LRRCT domain; sequence NPIQEKSEYWFFVIFMLLRLTELDQKKIKVEEKVSAVNK. A Guanylate kinase-like domain is found at 414–597; that stretch reads YPMLILAGPE…AYQKLSQLIR (184 aa). 421–428 lines the ATP pocket; it reads GPEACGKR. Residues 760 to 825 form a disordered region; that stretch reads PEGSISSHLG…TLPPIPQGRR (66 aa). Positions 763–774 are enriched in polar residues; that stretch reads SISSHLGSGASD. Positions 816 to 825 are enriched in pro residues; sequence TLPPIPQGRR.

As to quaternary structure, interacts (via guanylate kinase-like domain) with RIMBP3 (via coiled-coil region). Interacts (via guanylate kinase-like domain) with HOOK2. Interacts (via LRRCT domain) with KLC3. Interacts with HOOK1 and HOOK3.

It localises to the cytoplasmic vesicle. The protein resides in the secretory vesicle. It is found in the acrosome. Its subcellular location is the cytoplasm. The protein localises to the cytoskeleton. It localises to the cilium basal body. Its function is as follows. Involved in multiple aspects of sperm assembly including acrosome attachment, shaping of the sperm head and in the early aspects of axoneme development. Not essential for primary cilium biogenesis. The sequence is that of Leucine-rich repeat and guanylate kinase domain-containing protein (LRGUK) from Homo sapiens (Human).